The primary structure comprises 156 residues: 6,7-dimethyl-8-ribityllumazine synthase (156 aa).

5-amino-6-(D-ribitylamino)uracil-binding positions include phenylalanine 23, 57–59 (SFE), and 81–83 (AVI). Residue 86–87 (GT) participates in (2S)-2-hydroxy-3-oxobutyl phosphate binding. Histidine 89 (proton donor) is an active-site residue. Tyrosine 114 lines the 5-amino-6-(D-ribitylamino)uracil pocket. Residue arginine 128 participates in (2S)-2-hydroxy-3-oxobutyl phosphate binding.

The protein belongs to the DMRL synthase family. Forms an icosahedral capsid composed of 60 subunits, arranged as a dodecamer of pentamers.

It catalyses the reaction (2S)-2-hydroxy-3-oxobutyl phosphate + 5-amino-6-(D-ribitylamino)uracil = 6,7-dimethyl-8-(1-D-ribityl)lumazine + phosphate + 2 H2O + H(+). It functions in the pathway cofactor biosynthesis; riboflavin biosynthesis; riboflavin from 2-hydroxy-3-oxobutyl phosphate and 5-amino-6-(D-ribitylamino)uracil: step 1/2. Catalyzes the formation of 6,7-dimethyl-8-ribityllumazine by condensation of 5-amino-6-(D-ribitylamino)uracil with 3,4-dihydroxy-2-butanone 4-phosphate. This is the penultimate step in the biosynthesis of riboflavin. The polypeptide is 6,7-dimethyl-8-ribityllumazine synthase (Halorhodospira halophila (strain DSM 244 / SL1) (Ectothiorhodospira halophila (strain DSM 244 / SL1))).